A 334-amino-acid polypeptide reads, in one-letter code: MNKRISLTRYLVEQQRMEGHIPAQLRLLLEVVARACKRISLTVNKGALGGVLGSAETENIQGEMQKKLDIIANEVLIEANEWGGHLAAMASEEMDGIYIVPNRYPQGEYLLMFDPLDGSSNIDVNVSIGTIFSVLVKPDGQGVLEQDFLQPGNQQVAAGYCVFGPQTTLVLTVGDGVAMFTLDREQGSFILTAENMRVPVDTQEFAVNMSNQRHWDTPVKRYIDECLQGKDGPRGKDFNMRWVGSMVADVHRILTRGGVFLYPWDKREPEKPGKLRLMYEANPMAWLIEQAGGAASTGKQRILDLQPGKLHERVSVFLGSKNEVERIARYHGEA.

Glutamate 92, aspartate 114, leucine 116, and aspartate 117 together coordinate Mg(2+). Residues 117–120 (DGSS), asparagine 208, and lysine 274 contribute to the substrate site. Glutamate 280 provides a ligand contact to Mg(2+).

Belongs to the FBPase class 1 family. In terms of assembly, homotetramer. It depends on Mg(2+) as a cofactor.

The protein resides in the cytoplasm. It catalyses the reaction beta-D-fructose 1,6-bisphosphate + H2O = beta-D-fructose 6-phosphate + phosphate. The protein operates within carbohydrate biosynthesis; gluconeogenesis. This chain is Fructose-1,6-bisphosphatase class 1 2, found in Albidiferax ferrireducens (strain ATCC BAA-621 / DSM 15236 / T118) (Rhodoferax ferrireducens).